Here is a 212-residue protein sequence, read N- to C-terminus: Large ribosomal subunit protein uL3 (212 aa).

The interval 131 to 155 is disordered; it reads RGNMTHGSKNHRLPGSTGAGTTPGR.

It belongs to the universal ribosomal protein uL3 family. Part of the 50S ribosomal subunit. Forms a cluster with proteins L14 and L19.

In terms of biological role, one of the primary rRNA binding proteins, it binds directly near the 3'-end of the 23S rRNA, where it nucleates assembly of the 50S subunit. This is Large ribosomal subunit protein uL3 from Microcystis aeruginosa (strain NIES-843 / IAM M-2473).